The chain runs to 181 residues: Iron sulfur cluster assembly protein 1, mitochondrial (181 aa).

Residues 159–181 are disordered; that stretch reads RKTKNPTLGAEAAETPAAATATA. The segment covering 168–181 has biased composition (low complexity); sequence AEAAETPAAATATA.

Belongs to the NifU family. Component of the core Fe-S cluster (ISC) assembly machinery. Requires [2Fe-2S] cluster as cofactor.

It is found in the mitochondrion matrix. It functions in the pathway cofactor biosynthesis; iron-sulfur cluster biosynthesis. In terms of biological role, scaffold protein for the de novo synthesis of iron-sulfur (Fe-S) clusters within mitochondria, which is required for maturation of both mitochondrial and cytoplasmic [2Fe-2S] and [4Fe-4S] proteins. First, a [2Fe-2S] cluster is transiently assembled on the scaffold protein ISU1. In a second step, the cluster is released from ISU1, transferred to a glutaredoxin, followed by the formation of mitochondrial [2Fe-2S] proteins, the synthesis of [4Fe-4S] clusters and their target-specific insertion into the recipient apoproteins. Cluster assembly on ISU1 depends on the function of the cysteine desulfurase complex NFS1-ISD11, which serves as the sulfur donor for cluster synthesis, the iron-binding protein frataxin as the putative iron donor, and the electron transfer chain comprised of ferredoxin reductase and ferredoxin, which receive their electrons from NADH. This Yarrowia lipolytica (strain CLIB 122 / E 150) (Yeast) protein is Iron sulfur cluster assembly protein 1, mitochondrial (ISU1).